The chain runs to 1363 residues: MSEFHRLYFDELLFDFPDLVKVQKDSYASFVGGGDAVSSINDIFASVFPVNDGYGRASLEFVSCRMGEPKHDEYGCVERGITYSAPLRAILRLVVFGDETSGEGGEGVSTEPAVKDVREQEIYMGDIPIMSKNGTFIINGVERVVVSQMHRAPGVFFDNDKARSISGKLNYIARIIPYRGSWLDFEFDAKDVLYFRIDKKRKLPVTLLLRALGLSNKDIFAQFCEVSECRLTKDGKWTVCFVPERFKGVRLQYDLINAETGELVLAKGNRISIVLARNLYAKGLRYCYMDLEVMKDMYLADDLVSAKGEVLLPHGTRLTKEHVAKLEFLDVDSIKLVELKGNYIFSTVLQYDCSYEEAMLSIYRVIRPGEIPSIESAEKLFESLFFSPERYDLLNVGRIRLNAKFNLSHDESLTVLTKEDIFCTVRELALLQREVGDVDDIDHLGNSALGLRRVRSVGEFMDNQFRIGLVRMAKVIVENMATADFDTVMPCEMINSKILGAVIREFFMSSALSQFMDQTNPLSEITHKRRISALGPGGLNRGRAGFEVRDVHTTHYGRICATETPEGATIGLINSLAIYAKINKYGFIETPYRYVRDGRVTDEVTYLSAIDEIKANICQASVRVDEEGYILDDLVYCRRNYENVFIPRSEVQFADVSAKQIVSVAASLIPFLENDDANRALMGSNMQRQAVPLIVPEAPLVGTGMEGYVARGSGAVIVAKRAGIVQYIDARNIVVASESKDDFWIDSYTLCKFRKSNHNTCIHQRCVVYQGQRVKKGDILADGPAIQQGELALGRNLVVAFLSWRGYNFEDSVVISSNVVRDDLFTSVHLEGFECVVRDTRLGPEEITRDVSGVAEEFLHCLDEFGIACVGANVEAGDVLVGKVTPKSSSPVTPEEKLLRAIFGEKAIDVKDSSLYLPPGVSGCVVDVKVLQRRGIEKVGRALLIEKQAIDAEKARRDHELAVLTNYIYSLLKEMLVGKVALNTLAPISKGDLITGEALEKIDRESWWKLSVDEISSIKLLRQRFVDRFDEINKTYEENFEKIRGDDDLAQGVLMVVKVFVAVKHTLQPGDKMSGRHGNKGVISRIVPAEDMPYLADGTPVDIILNPLGVPSRMNVGQILETHLGWAAYNLGKKISKLLDEGNYSEVKSLILEIYKNDRKMMARLKRMTDTEIVEYSRSLRRGVPVAASVFEGPKTDEIERLLVLAGKDPSGQEVLYDGVTGEKFDRKVTVGCKYMLKLHHLVNDKIHARSIGSYSLITQQPLGGKSHFGGQRFGEMECWALQAYGATFALQEMLTIKSDDVVGRVNVYDSIVRGDNDFYYGVPESFNVMMNELRALCLNVEFCSDLERKEDFSDLPLAVSGR.

The protein belongs to the RNA polymerase beta chain family. The RNAP catalytic core consists of 2 alpha, 1 beta, 1 beta' and 1 omega subunit. When a sigma factor is associated with the core the holoenzyme is formed, which can initiate transcription.

The catalysed reaction is RNA(n) + a ribonucleoside 5'-triphosphate = RNA(n+1) + diphosphate. Functionally, DNA-dependent RNA polymerase catalyzes the transcription of DNA into RNA using the four ribonucleoside triphosphates as substrates. In Neorickettsia risticii (Ehrlichia risticii), this protein is DNA-directed RNA polymerase subunit beta.